We begin with the raw amino-acid sequence, 550 residues long: Arginine--tRNA ligase (550 aa).

The short motif at 130 to 140 is the 'HIGH' region element; sequence ANPTGPIHLGG.

Belongs to the class-I aminoacyl-tRNA synthetase family. In terms of assembly, monomer.

It localises to the cytoplasm. It catalyses the reaction tRNA(Arg) + L-arginine + ATP = L-arginyl-tRNA(Arg) + AMP + diphosphate. The chain is Arginine--tRNA ligase from Rhodococcus jostii (strain RHA1).